The primary structure comprises 465 residues: Glutamyl-tRNA reductase 2 (465 aa).

Substrate is bound by residues 62–65, Ser122, 127–129, and Gln133; these read TCNR and EGQ. Cys63 (nucleophile) is an active-site residue. 204–209 provides a ligand contact to NADP(+); it reads GAGKMG.

This sequence belongs to the glutamyl-tRNA reductase family.

The protein resides in the plastid. It localises to the chloroplast. It carries out the reaction (S)-4-amino-5-oxopentanoate + tRNA(Glu) + NADP(+) = L-glutamyl-tRNA(Glu) + NADPH + H(+). The protein operates within porphyrin-containing compound metabolism; protoporphyrin-IX biosynthesis; 5-aminolevulinate from L-glutamyl-tRNA(Glu): step 1/2. In terms of biological role, catalyzes the NADPH-dependent reduction of glutamyl-tRNA(Glu) to glutamate 1-semialdehyde (GSA). This Hordeum vulgare (Barley) protein is Glutamyl-tRNA reductase 2 (HEMA2).